The primary structure comprises 251 residues: Ubiquinone/menaquinone biosynthesis C-methyltransferase UbiE (251 aa).

S-adenosyl-L-methionine is bound by residues threonine 74, aspartate 95, and 123–124 (NA).

It belongs to the class I-like SAM-binding methyltransferase superfamily. MenG/UbiE family.

The enzyme catalyses a 2-demethylmenaquinol + S-adenosyl-L-methionine = a menaquinol + S-adenosyl-L-homocysteine + H(+). It catalyses the reaction a 2-methoxy-6-(all-trans-polyprenyl)benzene-1,4-diol + S-adenosyl-L-methionine = a 5-methoxy-2-methyl-3-(all-trans-polyprenyl)benzene-1,4-diol + S-adenosyl-L-homocysteine + H(+). It participates in quinol/quinone metabolism; menaquinone biosynthesis; menaquinol from 1,4-dihydroxy-2-naphthoate: step 2/2. The protein operates within cofactor biosynthesis; ubiquinone biosynthesis. Its function is as follows. Methyltransferase required for the conversion of demethylmenaquinol (DMKH2) to menaquinol (MKH2) and the conversion of 2-polyprenyl-6-methoxy-1,4-benzoquinol (DDMQH2) to 2-polyprenyl-3-methyl-6-methoxy-1,4-benzoquinol (DMQH2). This Edwardsiella ictaluri (strain 93-146) protein is Ubiquinone/menaquinone biosynthesis C-methyltransferase UbiE.